The following is a 431-amino-acid chain: Ribosomal protein uS12 methylthiotransferase RimO (431 aa).

An MTTase N-terminal domain is found at His4–His120. [4Fe-4S] cluster is bound by residues Cys13, Cys49, Cys83, Cys144, Cys148, and Cys151. The Radical SAM core domain maps to Leu130–Asp359. Positions Arg362–Gly429 constitute a TRAM domain.

This sequence belongs to the methylthiotransferase family. RimO subfamily. [4Fe-4S] cluster serves as cofactor.

Its subcellular location is the cytoplasm. It catalyses the reaction L-aspartate(89)-[ribosomal protein uS12]-hydrogen + (sulfur carrier)-SH + AH2 + 2 S-adenosyl-L-methionine = 3-methylsulfanyl-L-aspartate(89)-[ribosomal protein uS12]-hydrogen + (sulfur carrier)-H + 5'-deoxyadenosine + L-methionine + A + S-adenosyl-L-homocysteine + 2 H(+). Functionally, catalyzes the methylthiolation of an aspartic acid residue of ribosomal protein uS12. The protein is Ribosomal protein uS12 methylthiotransferase RimO of Pelodictyon phaeoclathratiforme (strain DSM 5477 / BU-1).